The primary structure comprises 238 residues: Ribonuclease PH (238 aa).

Phosphate is bound by residues Arg86 and 124–126; that span reads GTR.

The protein belongs to the RNase PH family. In terms of assembly, homohexameric ring arranged as a trimer of dimers.

The enzyme catalyses tRNA(n+1) + phosphate = tRNA(n) + a ribonucleoside 5'-diphosphate. Its function is as follows. Phosphorolytic 3'-5' exoribonuclease that plays an important role in tRNA 3'-end maturation. Removes nucleotide residues following the 3'-CCA terminus of tRNAs; can also add nucleotides to the ends of RNA molecules by using nucleoside diphosphates as substrates, but this may not be physiologically important. Probably plays a role in initiation of 16S rRNA degradation (leading to ribosome degradation) during starvation. The protein is Ribonuclease PH of Mesorhizobium japonicum (strain LMG 29417 / CECT 9101 / MAFF 303099) (Mesorhizobium loti (strain MAFF 303099)).